A 136-amino-acid polypeptide reads, in one-letter code: Small ribosomal subunit protein uS8 (136 aa).

Belongs to the universal ribosomal protein uS8 family. In terms of assembly, part of the 30S ribosomal subunit. Contacts proteins S5 and S12.

Its function is as follows. One of the primary rRNA binding proteins, it binds directly to 16S rRNA central domain where it helps coordinate assembly of the platform of the 30S subunit. The polypeptide is Small ribosomal subunit protein uS8 (Synechococcus sp. (strain JA-2-3B'a(2-13)) (Cyanobacteria bacterium Yellowstone B-Prime)).